The chain runs to 662 residues: MEGAPTVRQVMNEGDSSLATELQEDVEENPSPTVEENNVVVKKQGPNLHNWSGDWSFWISSSTYKDRNEEYRRQFTHLPDTERLIADYACALQRDILLQGRLYLSENWLCFYSNIFRWETTISIALKNITFMTKEKTARLIPNAIQIVTESEKFFFTSFGARDRSYLSIFRLWQNVLLDKSLTRQEFWQLLQQNYGTELGLNAEEMENLSLSIEDVRPRSPGRSSLDDSGERDEKLSKSISFTSESISRVSETESFDGNSSKGGLGKEESQNEKQTKKSLLPTLEKKLTRVPSKSLDLNKNEYLSLEKSSTSDSVDEENVPEKDLHGRLFINRIFHISADRMFELLFTSSRFMQKFASSRNIIDVVSTPWTAELGGDQLRTMTYTIVLNSPLTGKCTAATEKQTLYKESREARFYMVDSEVLTHDVPYHDYFYTVDRYCIIRSSKQKCRLRVSTDLKYRKQPWGLVKSLIEKNSWGSLEDYFKHLESDLLIEESILNQAIEDPGKLTGLRRRRRTFNRTAETVPKLSSQHSSGDVGLGTKADITGKKKEMENYNITLIVVMSIFVLLLVLLNVTLFLKLSKIEHAAQSFYRLRLQEEKSLNLASDVVSRAETIQNNKDQAHRLKGVLRDSIVMLEQLKSSLIMLQKTFDLLNKNKTGMAVES.

Positions 1–34 (MEGAPTVRQVMNEGDSSLATELQEDVEENPSPTV) are disordered. The GRAM domain occupies 69 to 136 (EEYRRQFTHL…KNITFMTKEK (68 aa)). Disordered stretches follow at residues 212-237 (SIED…EKLS) and 250-284 (VSET…LPTL). The segment covering 265–276 (LGKEESQNEKQT) has biased composition (basic and acidic residues). The 172-residue stretch at 326–497 (HGRLFINRIF…DLLIEESILN (172 aa)) folds into the VASt domain. The helical transmembrane segment at 557–577 (LIVVMSIFVLLLVLLNVTLFL) threads the bilayer.

It is found in the endoplasmic reticulum membrane. It localises to the cell membrane. Its function is as follows. Cholesterol transporter that mediates non-vesicular transport of cholesterol from the plasma membrane (PM) to the endoplasmic reticulum (ER). Contains unique domains for binding cholesterol and the PM, thereby serving as a molecular bridge for the transfer of cholesterol from the PM to the ER. Plays a crucial role in cholesterol homeostasis and has the unique ability to localize to the PM based on the level of membrane cholesterol. In lipid-poor conditions localizes to the ER membrane and in response to excess cholesterol in the PM is recruited to the endoplasmic reticulum-plasma membrane contact sites (EPCS) which is mediated by the GRAM domain. At the EPCS, the sterol-binding VASt/ASTER domain binds to the cholesterol in the PM and facilitates its transfer from the PM to ER. This is Protein Aster-C (GRAMD1C) from Pongo abelii (Sumatran orangutan).